The following is a 274-amino-acid chain: MSYIIKEIEEAWQIKENILHDSSKLIKLKKILNESIASLNQGIIRVCEKQGNQWKVNEWVKKAILLYFITTESQLYNNNYNSWYDKVAPKFPADTDKNIFKEAAIRKVPGAIVRTGTYIAKNVVIMPSFINIGAYIDEGTMIDTWATIGSCAQIGKNCHISGGAGIGGVLEPLQAKPVIIEDNCFVGARSEIAEGVIVEEGSVISMGVFIGSSTKIVYRDTGEIIYGRIPAYSVVVPGILPPPEVGKPGLYCVVIVKQVDKTTRGKVSINDLLR.

2 residues coordinate substrate: arginine 106 and aspartate 143.

The protein belongs to the transferase hexapeptide repeat family. As to quaternary structure, homotrimer.

Its subcellular location is the cytoplasm. It catalyses the reaction (S)-2,3,4,5-tetrahydrodipicolinate + succinyl-CoA + H2O = (S)-2-succinylamino-6-oxoheptanedioate + CoA. It participates in amino-acid biosynthesis; L-lysine biosynthesis via DAP pathway; LL-2,6-diaminopimelate from (S)-tetrahydrodipicolinate (succinylase route): step 1/3. The polypeptide is 2,3,4,5-tetrahydropyridine-2,6-dicarboxylate N-succinyltransferase (Rickettsia prowazekii (strain Madrid E)).